Consider the following 78-residue polypeptide: Large ribosomal subunit protein bL28 (78 aa).

Belongs to the bacterial ribosomal protein bL28 family.

This chain is Large ribosomal subunit protein bL28, found in Salmonella choleraesuis (strain SC-B67).